A 443-amino-acid polypeptide reads, in one-letter code: ATP-dependent protease ATPase subunit HslU (443 aa).

Residues Ile-20, 62-67 (GVGKTE), Asp-255, Glu-321, and Arg-393 contribute to the ATP site.

It belongs to the ClpX chaperone family. HslU subfamily. As to quaternary structure, a double ring-shaped homohexamer of HslV is capped on each side by a ring-shaped HslU homohexamer. The assembly of the HslU/HslV complex is dependent on binding of ATP.

The protein resides in the cytoplasm. In terms of biological role, ATPase subunit of a proteasome-like degradation complex; this subunit has chaperone activity. The binding of ATP and its subsequent hydrolysis by HslU are essential for unfolding of protein substrates subsequently hydrolyzed by HslV. HslU recognizes the N-terminal part of its protein substrates and unfolds these before they are guided to HslV for hydrolysis. The protein is ATP-dependent protease ATPase subunit HslU of Helicobacter pylori (strain Shi470).